Consider the following 5233-residue polypeptide: E3 ubiquitin-protein ligase highwire (5233 aa).

The tract at residues 197–230 (VVGGPGLPAEKRPRRDSANSDADSDTEEPTEREP) is disordered. Positions 205–214 (AEKRPRRDSA) are enriched in basic and acidic residues. Residues serine 213 and serine 216 each carry the phosphoserine modification. RCC1 repeat units follow at residues 615–666 (NGRV…ALLV), 669–724 (DGTV…FVTK), and 768–818 (KGQL…DKRL). Residues 680–700 (RGEDGDSSKNRRQPKAVKPKK) are disordered. The segment covering 689 to 700 (NRRQPKAVKPKK) has biased composition (basic residues). The tract at residues 900 to 950 (TELKPPPSDVQQRQQRSKTLIMRRKERKGELETGAAGGGAATPTDLDKDPP) is disordered. The segment covering 908-917 (DVQQRQQRSK) has biased composition (polar residues). RCC1 repeat units follow at residues 931–983 (ETGA…VLTL), 984–1033 (AGEV…LLTS), and 1035–1084 (GMVY…TVAP). Disordered regions lie at residues 1051 to 1109 (LPSD…EMPP) and 1287 to 1327 (AAAA…PPQL). Over residues 1092-1103 (RSQSPANVQPSG) the composition is skewed to polar residues. Residues 1287–1302 (AAAAAVAAPGTPVSAG) are compositionally biased toward low complexity. The PHR domain 1 stretch occupies residues 1436-1587 (NRFDNFGGGW…GQIPAILYRL (152 aa)). Residues 1681–1718 (SSTSVATGGGSNAAHGSGVVTTAKSVQSKPNKDKNTPR) form a disordered region. Polar residues predominate over residues 1699–1709 (VVTTAKSVQSK). The segment at 2014–2169 (ARFARCDVSR…GQLPCILYYS (156 aa)) is PHR domain 2. Disordered stretches follow at residues 2329 to 2353 (SADL…VPIN) and 2580 to 2604 (NGAG…NTHQ). Positions 2336 to 2350 (QSQSVSQSQSQSQSV) are enriched in low complexity. Positions 2885–4082 (AEVSAPGPNL…FVSSLNPTGG (1198 aa)) are required for interaction with Rae1. One copy of the Filamin repeat lies at 2906 to 3000 (WGGMAPPPRI…LEEVYRVDVK (95 aa)). 6 disordered regions span residues 3005–3024 (PPPT…SKLR), 3117–3210 (KGVG…EPEQ), 3277–3333 (GGQD…ASET), 3348–3378 (TTTG…PMGP), 3551–3587 (PRLL…DLGR), and 3901–3936 (ASLA…APPV). The segment covering 3176 to 3191 (KHADLAEREAQVQEER) has biased composition (basic and acidic residues). Residues 3192-3210 (EKEEEQVDDEDADDREPEQ) are compositionally biased toward acidic residues. The segment covering 3282 to 3292 (PRGNGNRSQQE) has biased composition (polar residues). Over residues 3348–3371 (TTTGQGEQQSELQLATTSTASSAS) the composition is skewed to low complexity. Over residues 3917 to 3932 (QHHQQQQMNLQLQQHQ) the composition is skewed to low complexity. In terms of domain architecture, DOC spans 4195–4374 (HNQVHSVATG…KHQPHLRLSH (180 aa)). 2 disordered regions span residues 4633-4655 (ASTG…GAVL) and 4680-4702 (LRSR…ALPP). Over residues 4638–4652 (SGSGGVSGSSSGNGG) the composition is skewed to gly residues. Zn(2+) contacts are provided by cysteine 4991, cysteine 4994, cysteine 5009, histidine 5011, histidine 5014, cysteine 5017, cysteine 5038, cysteine 5041, cysteine 5101, and cysteine 5104. The RING-type; atypical zinc finger occupies 4991–5042 (CMICFVEALSCAPSIHLECGHVFHYHCCKAVLEKRWSGPRITFGFSLCPICK). The tract at residues 5096-5231 (YAYYVCFKCQ…LGCGVCRNAQ (136 aa)) is tandem cysteine domain. Residue cysteine 5115 is part of the active site. Cysteine 5130, cysteine 5133, cysteine 5142, histidine 5145, cysteine 5154, cysteine 5157, and cysteine 5158 together coordinate Zn(2+). Cysteine 5165 is a catalytic residue. Cysteine 5172, cysteine 5175, cysteine 5193, cysteine 5207, histidine 5213, cysteine 5224, and cysteine 5227 together coordinate Zn(2+).

Belongs to the RING-Cys relay (RCR) family. As to quaternary structure, component of an E3 ubiquitin ligase complex composed of hiw, Rae1 and Fsn. Interacts with Rae1; the interaction with Rae1 may protect hiw from autophagy-mediated degradation. As to expression, express throughout the nervous system. Stage 13 embryos show expression in the central nervous system (CNS) at the longitudinal axon tracts around which the synaptic neuropil forms. Expression outside the CNS starts at stage 16 in presynaptic terminals at the periactive zone which surround the active zone. Expression at neuromuscular junctions (NMJ) and in the CNS is also seen in third instar larvae (at protein level).

It localises to the synapse. It is found in the cell projection. The protein localises to the axon. It catalyses the reaction [E2 ubiquitin-conjugating enzyme]-S-ubiquitinyl-L-cysteine + [acceptor protein]-L-threonine = [E2 ubiquitin-conjugating enzyme]-L-cysteine + [acceptor protein]-3-O-ubiquitinyl-L-threonine.. The protein operates within protein modification; protein ubiquitination. Its function is as follows. Atypical E3 ubiquitin-protein ligase which specifically mediates ubiquitination of threonine and serine residues on target proteins, instead of ubiquitinating lysine residues. Shows esterification activity towards both threonine and serine, with a preference for threonine, and acts via two essential catalytic cysteine residues that relay ubiquitin to its substrate via thioester intermediates. Required in the presynaptic motoneuron to down-regulate the levels of wnd and restrain synaptic terminal growth at the neuromuscular junction (NMJ) together with Rae1 and Fsn. The polypeptide is E3 ubiquitin-protein ligase highwire (Drosophila melanogaster (Fruit fly)).